The chain runs to 437 residues: MLLFWWWELGDPCAWTGKGRGTLKMSPATTGTFLLTVYTLFSKVHSDRNVYPSAGVLFVHVLEREYFKGEFPPYPKPGEVSNDPITFNTNLMGYPDRPGWLRYIQRTPYSDGVLYGSPTAENVGKPTIIEITAYNRRTFETARHNLIINIMSAEEFPLPYQAEFFIKNMNVEEMLASEVLGDFLGAVKNVWQPERLNAINITSALDRGGRVPLPINDMKEGVYVMVGADVAFSSCLREVENPQNQLRCSQEMEPVITCDKKFRTHFHIDWCKISLVDKTKQVSTYQEVVRGEGILPDGGEYKPPSDSLKSRDYYTDFLVTLAVPSAVALVLFLILAYIMCCRREGVEKRDMQTPDIQLVHHSSIQKSTKELRDMSKNREIAWPLSTLPVFHPVTGEVIPPTHTDNYDSTNMPLMQAQQNLPHQTQIPQPQTTGKWYP.

At 1–317 (MLLFWWWELG…LKSRDYYTDF (317 aa)) the chain is on the extracellular side. Asn200 carries N-linked (GlcNAc...) asparagine glycosylation. A helical transmembrane segment spans residues 318–338 (LVTLAVPSAVALVLFLILAYI). The Cytoplasmic segment spans residues 339–437 (MCCRREGVEK…QPQTTGKWYP (99 aa)).

This sequence belongs to the sarcoglycan alpha/epsilon family. N-glycosylated. Post-translationally, ubiquitinated, leading to its degradation by the proteasome. Identified in all tissues tested. Expression highest in lung and placenta, moderate in brain, heart and skeletal muscle, low in kidney and liver. Also detected in embryo.

It is found in the cell membrane. The protein localises to the sarcolemma. The protein resides in the golgi apparatus. Its subcellular location is the cell projection. It localises to the dendrite. It is found in the cytoplasm. The protein localises to the cytoskeleton. Its function is as follows. Component of the sarcoglycan complex, a subcomplex of the dystrophin-glycoprotein complex which forms a link between the F-actin cytoskeleton and the extracellular matrix. This chain is Epsilon-sarcoglycan (Sgce), found in Mus musculus (Mouse).